Consider the following 868-residue polypeptide: Metabotropic glutamate receptor 6 (868 aa).

An N-terminal signal peptide occupies residues 1–20 (MARLLLALLAWLAQMSPVRA). At 21–576 (AGSVRLAGGL…VVRLTWSSPW (556 aa)) the chain is on the extracellular side. Cys48 and Cys90 are disulfide-bonded. L-glutamate is bound by residues Ser145, 166–168 (AST), and Tyr216. 7 disulfides stabilise this stretch: Cys235/Cys527, Cys358/Cys374, Cys414/Cys421, Cys509/Cys528, Cys513/Cys531, Cys534/Cys546, and Cys549/Cys562. N-linked (GlcNAc...) asparagine glycosylation occurs at Asn287. Position 298 (Asp298) interacts with L-glutamate. Residue Lys391 participates in L-glutamate binding. Residues Asn442 and Asn470 are each glycosylated (N-linked (GlcNAc...) asparagine). Residue Asn558 is glycosylated (N-linked (GlcNAc...) asparagine). A helical transmembrane segment spans residues 577 to 599 (AAPPLLLAVLGIMATTTVVGTFV). Residues 600-613 (RHNNTPIVRASGRE) are Cytoplasmic-facing. A helical membrane pass occupies residues 614–634 (LSYVLLTGIFLIYAVTFLMVA). The Extracellular portion of the chain corresponds to 635 to 645 (EPGAAVCATRR). Residues 646 to 664 (LFLGLGTTLSYSALLTKTN) form a helical membrane-spanning segment. Residues 665 to 688 (RIYRIFEQGKRSVTPPPFISPTSQ) are Cytoplasmic-facing. A helical membrane pass occupies residues 689 to 709 (LVITFSLTSLQVVGVIAWLGA). At 710–739 (QPPHSVIDYEEQRTVDPEQARGVLKCDMSD) the chain is on the extracellular side. The chain crosses the membrane as a helical span at residues 740-761 (LSLIGCLGYSLLLMVTCTVYAI). The Cytoplasmic segment spans residues 762–774 (KARGVPETFNEAK). A helical membrane pass occupies residues 775–797 (PIGFTMYTTCIVWLAFVPIFFGT). Residues 798-810 (AQSAEKIYIQTTT) are Extracellular-facing. Residues 811–836 (LTVSLSLSASVSLGMLYVPKTYVILF) traverse the membrane as a helical segment. The Cytoplasmic segment spans residues 837 to 868 (HPEQNVQKRKRSLKTTSTVAAPPKGADTEDPK). A disordered region spans residues 845–868 (RKRSLKTTSTVAAPPKGADTEDPK).

It belongs to the G-protein coupled receptor 3 family. In terms of assembly, homodimer. Interacts with GPR179. Interacts with photoreceptor synaptic protein LRIT1 (via its N-terminal extracellular domain).

The protein resides in the cell membrane. Its subcellular location is the endoplasmic reticulum membrane. It is found in the golgi apparatus membrane. It localises to the cell projection. The protein localises to the dendrite. Functionally, G-protein coupled receptor for glutamate. Ligand binding causes a conformation change that triggers signaling via guanine nucleotide-binding proteins (G proteins) and modulates the activity of down-stream effectors, such as adenylate cyclase. Signaling inhibits adenylate cyclase activity. Signaling stimulates TRPM1 channel activity and Ca(2+) uptake. Required for normal vision. This chain is Metabotropic glutamate receptor 6 (GRM6), found in Oryctolagus cuniculus (Rabbit).